A 432-amino-acid polypeptide reads, in one-letter code: Anaerobic glycerol-3-phosphate dehydrogenase subunit B (432 aa).

This sequence belongs to the anaerobic G-3-P dehydrogenase subunit B family. In terms of assembly, composed of a catalytic GlpA/B dimer and of membrane bound GlpC. FMN is required as a cofactor.

It carries out the reaction a quinone + sn-glycerol 3-phosphate = dihydroxyacetone phosphate + a quinol. It functions in the pathway polyol metabolism; glycerol degradation via glycerol kinase pathway; glycerone phosphate from sn-glycerol 3-phosphate (anaerobic route): step 1/1. Conversion of glycerol 3-phosphate to dihydroxyacetone. Uses fumarate or nitrate as electron acceptor. The sequence is that of Anaerobic glycerol-3-phosphate dehydrogenase subunit B from Haemophilus influenzae (strain PittEE).